We begin with the raw amino-acid sequence, 440 residues long: tRNA-2-methylthio-N(6)-dimethylallyladenosine synthase (440 aa).

One can recognise an MTTase N-terminal domain in the interval Lys5–Thr121. Residues Cys14, Cys50, Cys84, Cys159, Cys163, and Cys166 each contribute to the [4Fe-4S] cluster site. The region spanning Ala145 to Asp378 is the Radical SAM core domain. Positions Asp378–Asp440 constitute a TRAM domain.

It belongs to the methylthiotransferase family. MiaB subfamily. Monomer. It depends on [4Fe-4S] cluster as a cofactor.

The protein resides in the cytoplasm. The enzyme catalyses N(6)-dimethylallyladenosine(37) in tRNA + (sulfur carrier)-SH + AH2 + 2 S-adenosyl-L-methionine = 2-methylsulfanyl-N(6)-dimethylallyladenosine(37) in tRNA + (sulfur carrier)-H + 5'-deoxyadenosine + L-methionine + A + S-adenosyl-L-homocysteine + 2 H(+). Catalyzes the methylthiolation of N6-(dimethylallyl)adenosine (i(6)A), leading to the formation of 2-methylthio-N6-(dimethylallyl)adenosine (ms(2)i(6)A) at position 37 in tRNAs that read codons beginning with uridine. This Ruegeria sp. (strain TM1040) (Silicibacter sp.) protein is tRNA-2-methylthio-N(6)-dimethylallyladenosine synthase.